The sequence spans 534 residues: UDP-glucuronosyltransferase 1A5 (534 aa).

The first 28 residues, 1–28 (MATGLQVPLPQLATGLLLLLSVQPWAES), serve as a signal peptide directing secretion. N-linked (GlcNAc...) asparagine glycans are attached at residues N119, N296, and N348. Residues 492–508 (VIGFLLAVVLTVAFITF) form a helical membrane-spanning segment.

This sequence belongs to the UDP-glycosyltransferase family. As to quaternary structure, homodimer. Homooligomer. Interacts with UGT1A1, UGT1A3, UGT1A4, UGT1A6, UGT1A7, UGT1A8, UGT1A9 and UGT1A10 to form heterodimers. Isoform 1 interacts with isoform 2/i2 suggesting that oligomerization is involved in negative regulation of transferase activity by isoform 2. Isoform 1 also interacts with respective i2 isoforms of UGT1A1, UGT1A3, UGT1A4, UGT1A6, UGT1A7, UGT1A8, UGT1A9 and UGT1A10. In terms of tissue distribution, isoform 1 and isoform 2 are expressed in colon and small intestine. Neither isoform is expressed in liver, kidney or esophagus.

It localises to the endoplasmic reticulum membrane. The catalysed reaction is glucuronate acceptor + UDP-alpha-D-glucuronate = acceptor beta-D-glucuronoside + UDP + H(+). It catalyses the reaction zolasartan + UDP-alpha-D-glucuronate = zolarsartan-1-N-beta-D-glucuronide + UDP. In terms of biological role, UDP-glucuronosyltransferase (UGT) that catalyzes phase II biotransformation reactions in which lipophilic substrates are conjugated with glucuronic acid to increase the metabolite's water solubility, thereby facilitating excretion into either the urine or bile. Essential for the elimination and detoxification of drugs, xenobiotics and endogenous compounds. Involved in the glucuronidation of the AGTR1 angiotensin receptor antagonist zolarsatan, a drug which can inhibit the effect of angiotensin II. Its function is as follows. Lacks UGT glucuronidation activity but acts as a negative regulator of isoform 1. This Homo sapiens (Human) protein is UDP-glucuronosyltransferase 1A5.